The chain runs to 375 residues: Growth/differentiation factor 8 (375 aa).

Positions 1–23 (MQKLAVYVYIYLFMQILVHPVAL) are cleaved as a signal peptide. The propeptide occupies 24-266 (DGSSQPTENA…VTDTPKRSRR (243 aa)). N71 carries an N-linked (GlcNAc...) asparagine glycan. 4 disulfides stabilise this stretch: C272-C282, C281-C340, C309-C372, and C313-C374.

Belongs to the TGF-beta family. Homodimer; disulfide-linked.

The protein localises to the secreted. Functionally, acts specifically as a negative regulator of skeletal muscle growth. The protein is Growth/differentiation factor 8 (MSTN) of Meleagris gallopavo (Wild turkey).